We begin with the raw amino-acid sequence, 83 residues long: Colicin-E5 immunity protein (83 aa).

This protein is able to protect a cell, which harbors the plasmid ColE5 encoding colicin E5, against colicin E5. This is Colicin-E5 immunity protein (imm) from Escherichia coli.